The primary structure comprises 337 residues: Ferredoxin--NADP reductase (337 aa).

Residues aspartate 35, glutamine 43, tyrosine 48, alanine 88, phenylalanine 122, aspartate 289, and threonine 330 each contribute to the FAD site.

The protein belongs to the ferredoxin--NADP reductase type 2 family. In terms of assembly, homodimer. FAD is required as a cofactor.

The catalysed reaction is 2 reduced [2Fe-2S]-[ferredoxin] + NADP(+) + H(+) = 2 oxidized [2Fe-2S]-[ferredoxin] + NADPH. The chain is Ferredoxin--NADP reductase from Ehrlichia ruminantium (strain Welgevonden).